A 118-amino-acid chain; its full sequence is Large ribosomal subunit protein bL20 (118 aa).

It belongs to the bacterial ribosomal protein bL20 family.

Functionally, binds directly to 23S ribosomal RNA and is necessary for the in vitro assembly process of the 50S ribosomal subunit. It is not involved in the protein synthesizing functions of that subunit. The protein is Large ribosomal subunit protein bL20 of Caldicellulosiruptor saccharolyticus (strain ATCC 43494 / DSM 8903 / Tp8T 6331).